Here is a 54-residue protein sequence, read N- to C-terminus: Protein P32 (54 aa).

The helical transmembrane segment at 4 to 24 (FGKTLITIVTAIIGVAIIAVI) threads the bilayer.

It localises to the virion membrane. Functionally, component of the phage injection machinery. Required for DNA injection in the membrane transformation event. Involved in the formation of the membrane tail tube to connect the virus interior with the host cytosol. Essential for viral infectivity. This chain is Protein P32 (XXXII), found in Enterobacteria phage PRD1 (Bacteriophage PRD1).